A 413-amino-acid polypeptide reads, in one-letter code: Zinc finger CCCH domain-containing protein 6 (413 aa).

Disordered regions lie at residues Pro28–Pro61, Asp159–Ala191, and Gln333–Lys356. Residues Pro176–Leu189 are compositionally biased toward polar residues. The C3H1-type zinc-finger motif lies at Pro357–Thr385. A compositionally biased stretch (polar residues) spans Pro389–Gln403. The interval Pro389 to Asp413 is disordered.

This chain is Zinc finger CCCH domain-containing protein 6, found in Arabidopsis thaliana (Mouse-ear cress).